The chain runs to 367 residues: Glutamate 5-kinase (367 aa).

An ATP-binding site is contributed by Lys-17. Residues Ser-57, Asp-144, and Asn-156 each contribute to the substrate site. ATP contacts are provided by residues 176 to 177 (SD) and 217 to 223 (TGGMTSK). Positions 279-357 (AGALTLDEGA…SELPGELRRP (79 aa)) constitute a PUA domain.

It belongs to the glutamate 5-kinase family.

It localises to the cytoplasm. It carries out the reaction L-glutamate + ATP = L-glutamyl 5-phosphate + ADP. It participates in amino-acid biosynthesis; L-proline biosynthesis; L-glutamate 5-semialdehyde from L-glutamate: step 1/2. Its function is as follows. Catalyzes the transfer of a phosphate group to glutamate to form L-glutamate 5-phosphate. The chain is Glutamate 5-kinase from Mycolicibacterium paratuberculosis (strain ATCC BAA-968 / K-10) (Mycobacterium paratuberculosis).